The following is a 344-amino-acid chain: Heat-inducible transcription repressor HrcA (344 aa).

This sequence belongs to the HrcA family.

Negative regulator of class I heat shock genes (grpE-dnaK-dnaJ and groELS operons). Prevents heat-shock induction of these operons. This Aster yellows witches'-broom phytoplasma (strain AYWB) protein is Heat-inducible transcription repressor HrcA.